We begin with the raw amino-acid sequence, 210 residues long: Ion-translocating oxidoreductase complex subunit G (210 aa).

A helical membrane pass occupies residues 9–29 (GVTLAVFAAITTGLTAVINAV). T175 bears the FMN phosphoryl threonine mark.

This sequence belongs to the RnfG family. The complex is composed of six subunits: RnfA, RnfB, RnfC, RnfD, RnfE and RnfG. FMN serves as cofactor.

It localises to the cell inner membrane. Part of a membrane-bound complex that couples electron transfer with translocation of ions across the membrane. In Erwinia tasmaniensis (strain DSM 17950 / CFBP 7177 / CIP 109463 / NCPPB 4357 / Et1/99), this protein is Ion-translocating oxidoreductase complex subunit G.